A 536-amino-acid chain; its full sequence is Putative ATP-dependent RNA helicase L364 (536 aa).

Residues I47–P214 form the Helicase ATP-binding domain. S60–T67 serves as a coordination point for ATP. A DEAH box motif is present at residues D160–H163. Residues L288–K334 are a coiled coil. The 149-residue stretch at F338–E486 folds into the Helicase C-terminal domain. Positions V502–V536 are disordered.

Belongs to the DEAD box helicase family. DEAH subfamily.

The enzyme catalyses ATP + H2O = ADP + phosphate + H(+). The protein is Putative ATP-dependent RNA helicase L364 of Acanthamoeba polyphaga (Amoeba).